A 504-amino-acid polypeptide reads, in one-letter code: Maturase K (504 aa).

This sequence belongs to the intron maturase 2 family. MatK subfamily.

The protein localises to the plastid. Its subcellular location is the chloroplast. Its function is as follows. Usually encoded in the trnK tRNA gene intron. Probably assists in splicing its own and other chloroplast group II introns. This Gossypium gossypioides (Mexican cotton) protein is Maturase K.